The sequence spans 320 residues: Small ribosomal subunit protein uS2 (320 aa).

The segment covering Met-1 to Ala-22 has biased composition (acidic residues). Residues Met-1 to Arg-83 are disordered. The segment covering Asp-27–Asp-41 has biased composition (low complexity). Composition is skewed to acidic residues over residues Thr-42–Pro-57 and Asp-65–Glu-78.

This sequence belongs to the universal ribosomal protein uS2 family.

This is Small ribosomal subunit protein uS2 from Salinibacter ruber (strain DSM 13855 / M31).